The following is a 1043-amino-acid chain: P3N-PIPO polyprotein (1043 aa).

Positions 219–362 constitute a Peptidase S30 domain; that stretch reads KMNDQGVDML…RTMSHKIVHF (144 aa). Residues histidine 270, aspartate 279, and serine 313 each act as for P1 proteinase activity in the active site. Positions 414-417 match the Involved in interaction with stylet and aphid transmission motif; it reads KITC. The Involved in virions binding and aphid transmission motif lies at 672–674; that stretch reads PTK. The 123-residue stretch at 698–820 folds into the Peptidase C6 domain; that stretch reads MYIAKEGYCY…ESSLKHYRVG (123 aa). Catalysis depends on for helper component proteinase activity residues cysteine 706 and histidine 779.

Belongs to the potyviridae P3N-PIPO polyprotein family. Interacts (via PIPO domain) with host PCaP1 protein; this interaction may help to anchor the movement complex to the plasma membrane from which the complex could move to the plasmodesmata. In terms of processing, potyviral RNA is expressed as two polyproteins which undergo post-translational proteolytic processing. Genome polyprotein is processed by NIa-pro, P1 and HC-pro proteinases resulting in the production of at least ten individual proteins. P3N-PIPO is cleaved by P1 and HC-pro proteinases resulting in the production of three individual proteins. The P1 proteinase and the HC-pro cleave only their respective C-termini autocatalytically.

It localises to the host cell junction. Its subcellular location is the host plasmodesma. The catalysed reaction is Hydrolyzes a Gly-|-Gly bond at its own C-terminus, commonly in the sequence -Tyr-Xaa-Val-Gly-|-Gly, in the processing of the potyviral polyprotein.. In terms of biological role, cysteine protease that cleaves a Gly-Gly dipeptide at its own C-terminus. Required for aphid transmission and also has proteolytic activity. Interacts with virions and aphid stylets. Acts as a suppressor of RNA-mediated gene silencing, also known as post-transcriptional gene silencing (PTGS), a mechanism of plant viral defense that limits the accumulation of viral RNAs. May have RNA-binding activity. Its function is as follows. Allows efficient cell to cell propagation, by bypassing the host cell wall barrier. Transports viral genome to neighboring plant cells directly through plasmosdesmata, without any budding. The chain is P3N-PIPO polyprotein from Alliaria petiolata (Garlic mustard).